The following is a 108-amino-acid chain: UPF0102 protein WS0451 (108 aa).

The protein belongs to the UPF0102 family.

The protein is UPF0102 protein WS0451 of Wolinella succinogenes (strain ATCC 29543 / DSM 1740 / CCUG 13145 / JCM 31913 / LMG 7466 / NCTC 11488 / FDC 602W) (Vibrio succinogenes).